A 408-amino-acid chain; its full sequence is GDSL esterase/lipase At1g54790 (408 aa).

An N-terminal signal peptide occupies residues 1-24 (MNITKMKLFYVILFFISSLQISNS). The active-site Nucleophile is the S38. 3 N-linked (GlcNAc...) asparagine glycosylation sites follow: N273, N289, and N361. Residues D370 and H373 contribute to the active site.

It belongs to the 'GDSL' lipolytic enzyme family.

The protein localises to the secreted. In Arabidopsis thaliana (Mouse-ear cress), this protein is GDSL esterase/lipase At1g54790.